The chain runs to 339 residues: 2-oxoisovalerate dehydrogenase subunit beta (339 aa).

As to quaternary structure, heterodimer of an alpha and a beta chain. Requires thiamine diphosphate as cofactor.

It catalyses the reaction N(6)-[(R)-lipoyl]-L-lysyl-[protein] + 3-methyl-2-oxobutanoate + H(+) = N(6)-[(R)-S(8)-2-methylpropanoyldihydrolipoyl]-L-lysyl-[protein] + CO2. In terms of biological role, the branched-chain alpha-keto dehydrogenase complex catalyzes the overall conversion of alpha-keto acids to acyl-CoA and CO(2). It contains multiple copies of three enzymatic components: branched-chain alpha-keto acid decarboxylase (E1), lipoamide acyltransferase (E2) and lipoamide dehydrogenase (E3). This chain is 2-oxoisovalerate dehydrogenase subunit beta (bkdA2), found in Pseudomonas putida (Arthrobacter siderocapsulatus).